Reading from the N-terminus, the 751-residue chain is Semaphorin-3C (751 aa).

An N-terminal signal peptide occupies residues 1-20 (MAFRAICVLVGVFICSICVR). Residues 28–511 (RVYLTFDELR…SNEGVSQVSL (484 aa)) form the Sema domain. N-linked (GlcNAc...) asparagine glycosylation occurs at Asn-81. A disulfide bridge links Cys-101 with Cys-112. N-linked (GlcNAc...) asparagine glycosylation is present at Asn-123. Cys-130 and Cys-139 are disulfide-bonded. Asn-252 and Asn-268 each carry an N-linked (GlcNAc...) asparagine glycan. 2 disulfides stabilise this stretch: Cys-266–Cys-378 and Cys-290–Cys-338. An N-linked (GlcNAc...) asparagine glycan is attached at Asn-465. Cysteines 514 and 532 form a disulfide. The Ig-like C2-type domain occupies 571–655 (AYRNAAEIVQ…TENSFKQTIA (85 aa)). N-linked (GlcNAc...) asparagine glycosylation is found at Asn-585 and Asn-586. Cys-643 and Cys-709 are disulfide-bonded.

This sequence belongs to the semaphorin family. As to quaternary structure, interacts with PLXND1.

It is found in the secreted. Binds to plexin family members and plays an important role in the regulation of developmental processes. Required for normal cardiovascular development during embryogenesis. Functions as attractant for growing axons, and thereby plays an important role in axon growth and axon guidance. The polypeptide is Semaphorin-3C (Sema3c) (Mus musculus (Mouse)).